The chain runs to 526 residues: UDP-glycosyltransferase UGT5 (526 aa).

The Lumenal segment spans residues M1–Q474. N-linked (GlcNAc...) asparagine glycans are attached at residues N49, N124, and N283. Residues Y475 to I495 traverse the membrane as a helical segment. The Cytoplasmic segment spans residues Y496–N526.

It belongs to the UDP-glycosyltransferase family.

It is found in the microsome membrane. In terms of biological role, catalyzes the transfer of a glycosyl group from a UDP-sugar to an acceptor molecule. This Dactylopius coccus (Cochineal) protein is UDP-glycosyltransferase UGT5.